The primary structure comprises 260 residues: Carbonic anhydrase 3 (260 aa).

Alanine 2 carries the N-acetylalanine modification. The region spanning 3 to 259 (KEWGYASHNG…VKGRVVRASF (257 aa)) is the Alpha-carbonic anhydrase domain. 5 positions are modified to phosphoserine: serine 29, serine 43, serine 48, serine 50, and serine 55. The involved in proton transfer stretch occupies residues 64–67 (KTCR). Phosphothreonine is present on threonine 73. Histidine 94, histidine 96, and histidine 119 together coordinate Zn(2+). Tyrosine 127 is subject to Phosphotyrosine. 2 positions are modified to phosphothreonine: threonine 129 and threonine 176. S-glutathionyl cysteine is present on residues cysteine 182 and cysteine 187. Residue 198-199 (TT) coordinates substrate. The residue at position 216 (threonine 216) is a Phosphothreonine. Serine 219 carries the post-translational modification Phosphoserine.

Belongs to the alpha-carbonic anhydrase family. Zn(2+) is required as a cofactor. In terms of processing, S-thiolated both by thiol-disulfide exchange with glutathione disulfide and by oxyradical-initiated S-thiolation with reduced glutathione. S-glutathionylated in hepatocytes under oxidative stress. As to expression, expressed at lower levels in adipose tissue from animals that were either genetically obese or had experimentally induced obesity.

It localises to the cytoplasm. It catalyses the reaction hydrogencarbonate + H(+) = CO2 + H2O. Its activity is regulated as follows. Inhibited by acetazolamide. In terms of biological role, reversible hydration of carbon dioxide. This chain is Carbonic anhydrase 3, found in Mus musculus (Mouse).